Reading from the N-terminus, the 602-residue chain is UvrABC system protein C (602 aa).

Positions 17–94 (KTSGCYKMYS…IKKYKPTYNI (78 aa)) constitute a GIY-YIG domain. Residues 199-234 (SKLLNDIEIKMKEVIMKENFEAAIKLKETKKSLIEI) enclose the UVR domain.

This sequence belongs to the UvrC family. In terms of assembly, interacts with UvrB in an incision complex.

The protein resides in the cytoplasm. The UvrABC repair system catalyzes the recognition and processing of DNA lesions. UvrC both incises the 5' and 3' sides of the lesion. The N-terminal half is responsible for the 3' incision and the C-terminal half is responsible for the 5' incision. The chain is UvrABC system protein C from Borrelia duttonii (strain Ly).